A 44-amino-acid polypeptide reads, in one-letter code: Cytochrome b559 subunit beta (44 aa).

A helical transmembrane segment spans residues W19–A35. H23 contributes to the heme binding site.

The protein belongs to the PsbE/PsbF family. In terms of assembly, heterodimer of an alpha subunit and a beta subunit. PSII is composed of 1 copy each of membrane proteins PsbA, PsbB, PsbC, PsbD, PsbE, PsbF, PsbH, PsbI, PsbJ, PsbK, PsbL, PsbM, PsbT, PsbX, PsbY, PsbZ, Psb30/Ycf12, peripheral proteins PsbO, CyanoQ (PsbQ), PsbU, PsbV and a large number of cofactors. It forms dimeric complexes. Heme b serves as cofactor.

The protein resides in the cellular thylakoid membrane. This b-type cytochrome is tightly associated with the reaction center of photosystem II (PSII). PSII is a light-driven water:plastoquinone oxidoreductase that uses light energy to abstract electrons from H(2)O, generating O(2) and a proton gradient subsequently used for ATP formation. It consists of a core antenna complex that captures photons, and an electron transfer chain that converts photonic excitation into a charge separation. This Crocosphaera subtropica (strain ATCC 51142 / BH68) (Cyanothece sp. (strain ATCC 51142)) protein is Cytochrome b559 subunit beta.